A 195-amino-acid chain; its full sequence is 2-amino-4-hydroxy-6-hydroxymethyldihydropteridine pyrophosphokinase (195 aa).

This sequence belongs to the HPPK family.

It catalyses the reaction 6-hydroxymethyl-7,8-dihydropterin + ATP = (7,8-dihydropterin-6-yl)methyl diphosphate + AMP + H(+). Its pathway is cofactor biosynthesis; tetrahydrofolate biosynthesis; 2-amino-4-hydroxy-6-hydroxymethyl-7,8-dihydropteridine diphosphate from 7,8-dihydroneopterin triphosphate: step 4/4. In terms of biological role, catalyzes the transfer of pyrophosphate from adenosine triphosphate (ATP) to 6-hydroxymethyl-7,8-dihydropterin, an enzymatic step in folate biosynthesis pathway. The sequence is that of 2-amino-4-hydroxy-6-hydroxymethyldihydropteridine pyrophosphokinase (folK) from Synechocystis sp. (strain ATCC 27184 / PCC 6803 / Kazusa).